We begin with the raw amino-acid sequence, 140 residues long: Nucleoside diphosphate kinase (140 aa).

ATP is bound by residues K11, F59, R87, T93, R104, and N114. H117 acts as the Pros-phosphohistidine intermediate in catalysis.

This sequence belongs to the NDK family. As to quaternary structure, homotetramer. The cofactor is Mg(2+).

It is found in the cytoplasm. It carries out the reaction a 2'-deoxyribonucleoside 5'-diphosphate + ATP = a 2'-deoxyribonucleoside 5'-triphosphate + ADP. The catalysed reaction is a ribonucleoside 5'-diphosphate + ATP = a ribonucleoside 5'-triphosphate + ADP. Functionally, major role in the synthesis of nucleoside triphosphates other than ATP. The ATP gamma phosphate is transferred to the NDP beta phosphate via a ping-pong mechanism, using a phosphorylated active-site intermediate. This is Nucleoside diphosphate kinase from Acidiphilium cryptum (strain JF-5).